Reading from the N-terminus, the 404-residue chain is L-cysteine:1D-myo-inositol 2-amino-2-deoxy-alpha-D-glucopyranoside ligase 1 (404 aa).

Position 47 (C47) interacts with Zn(2+). Residues 47-50 (CGIT), T62, and 85-87 (NIT) contribute to the L-cysteinyl-5'-AMP site. Positions 49–59 (ITPYDSTHLGH) match the 'HIGH' region motif. The 'ERGGDP' region signature appears at 188–193 (ERGGDP). L-cysteinyl-5'-AMP is bound at residue W228. A Zn(2+)-binding site is contributed by C232. 250–252 (GSD) contributes to the L-cysteinyl-5'-AMP binding site. Position 257 (H257) interacts with Zn(2+). I284 contacts L-cysteinyl-5'-AMP. The 'KMSKS' region signature appears at 290–294 (KMSKS).

This sequence belongs to the class-I aminoacyl-tRNA synthetase family. MshC subfamily. In terms of assembly, monomer. Zn(2+) serves as cofactor.

The enzyme catalyses 1D-myo-inositol 2-amino-2-deoxy-alpha-D-glucopyranoside + L-cysteine + ATP = 1D-myo-inositol 2-(L-cysteinylamino)-2-deoxy-alpha-D-glucopyranoside + AMP + diphosphate + H(+). In terms of biological role, catalyzes the ATP-dependent condensation of GlcN-Ins and L-cysteine to form L-Cys-GlcN-Ins. This is L-cysteine:1D-myo-inositol 2-amino-2-deoxy-alpha-D-glucopyranoside ligase 1 from Corynebacterium jeikeium (strain K411).